A 2016-amino-acid chain; its full sequence is MANFLLPRGTSSFRRFTRESLAAIEKRMAEKQARGSTTLQESREGLPEEEAPRPQLDLQASKKLPDLYGNPPQELIGEPLEDLDPFYSTQKTFIVLNKGKTIFRFSATNALYVLSPFHPIRRAAVKILVHSLFNMLIMCTILTNCVFMAQHDPPPWTKYVEYTFTAIYTFESLVKILARGFCLHAFTFLRDPWNWLDFSVIIMAYTTEFVDLGNVSALRTFRVLRALKTISVISGLKTIVGALIQSVKKLADVMVLTVFCLSVFALIGLQLFMGNLRHKCVRNFTALNGTNGSVEADGLVWESLDLYLSDPENYLLKNGTSDVLLCGNSSDAGTCPEGYRCLKAGENPDHGYTSFDSFAWAFLALFRLMTQDCWERLYQQTLRSAGKIYMIFFMLVIFLGSFYLVNLILAVVAMAYEEQNQATIAETEEKEKRFQEAMEMLKKEHEALTIRGVDTVSRSSLEMSPLAPVNSHERRSKRRKRMSSGTEECGEDRLPKSDSEDGPRAMNHLSLTRGLSRTSMKPRSSRGSIFTFRRRDLGSEADFADDENSTAGESESHHTSLLVPWPLRRTSAQGQPSPGTSAPGHALHGKKNSTVDCNGVVSLLGAGDPEATSPGSHLLRPVMLEHPPDTTTPSEEPGGPQMLTSQAPCVDGFEEPGARQRALSAVSVLTSALEELEESRHKCPPCWNRLAQRYLIWECCPLWMSIKQGVKLVVMDPFTDLTITMCIVLNTLFMALEHYNMTSEFEEMLQVGNLVFTGIFTAEMTFKIIALDPYYYFQQGWNIFDSIIVILSLMELGLSRMSNLSVLRSFRLLRVFKLAKSWPTLNTLIKIIGNSVGALGNLTLVLAIIVFIFAVVGMQLFGKNYSELRDSDSGLLPRWHMMDFFHAFLIIFRILCGEWIETMWDCMEVSGQSLCLLVFLLVMVIGNLVVLNLFLALLLSSFSADNLTAPDEDREMNNLQLALARIQRGLRFVKRTTWDFCCGLLRQRPQKPAALAAQGQLPSCIATPYSPPPPETEKVPPTRKETRFEEGEQPGQGTPGDPEPVCVPIAVAESDTDDQEEDEENSLGTEEESSKQQESQPVSGGPEAPPDSRTWSQVSATASSEAEASASQADWRQQWKAEPQAPGCGETPEDSCSEGSTADMTNTAELLEQIPDLGQDVKDPEDCFTEGCVRRCPCCAVDTTQAPGKVWWRLRKTCYHIVEHSWFETFIIFMILLSSGALAFEDIYLEERKTIKVLLEYADKMFTYVFVLEMLLKWVAYGFKKYFTNAWCWLDFLIVDVSLVSLVANTLGFAEMGPIKSLRTLRALRPLRALSRFEGMRVVVNALVGAIPSIMNVLLVCLIFWLIFSIMGVNLFAGKFGRCINQTEGDLPLNYTIVNNKSQCESLNLTGELYWTKVKVNFDNVGAGYLALLQVATFKGWMDIMYAAVDSRGYEEQPQWEYNLYMYIYFVIFIIFGSFFTLNLFIGVIIDNFNQQKKKLGGQDIFMTEEQKKYYNAMKKLGSKKPQKPIPRPLNKYQGFIFDIVTKQAFDVTIMFLICLNMVTMMVETDDQSPEKINILAKINLLFVAIFTGECIVKLAALRHYYFTNSWNIFDFVVVILSIVGTVLSDIIQKYFFSPTLFRVIRLARIGRILRLIRGAKGIRTLLFALMMSLPALFNIGLLLFLVMFIYSIFGMANFAYVKWEAGIDDMFNFQTFANSMLCLFQITTSAGWDGLLSPILNTGPPYCDPTLPNSNGSRGDCGSPAVGILFFTTYIIISFLIVVNMYIAIILENFSVATEESTEPLSEDDFDMFYEIWEKFDPEATQFIEYSVLSDFADALSEPLRIAKPNQISLINMDLPMVSGDRIHCMDILFAFTKRVLGESGEMDALKIQMEEKFMAANPSKISYEPITTTLRRKHEEVSAMVIQRAFRRHLLQRSLKHASFLFRQQAGSGLSEEDAPEREGLIAYVMSENFSRPLGPPSSSSISSTSFPPSYDSVTRATSDNLQVRGSDYSHSEDLADFPPSPDRDRESIV.

The Cytoplasmic segment spans residues 1 to 129 (MANFLLPRGT…IRRAAVKILV (129 aa)). The interval 28 to 56 (MAEKQARGSTTLQESREGLPEEEAPRPQL) is disordered. A Phosphoserine modification is found at Ser-36. Thr-38 carries the post-translational modification Phosphothreonine. A compositionally biased stretch (basic and acidic residues) spans 41-52 (ESREGLPEEEAP). One copy of the I repeat lies at 113–420 (VLSPFHPIRR…VVAMAYEEQN (308 aa)). Residues 130–149 (HSLFNMLIMCTILTNCVFMA) form a helical membrane-spanning segment. Residues 150-157 (QHDPPPWT) are Extracellular-facing. A helical membrane pass occupies residues 158–179 (KYVEYTFTAIYTFESLVKILAR). The Cytoplasmic portion of the chain corresponds to 180 to 188 (GFCLHAFTF). The chain crosses the membrane as a helical span at residues 189 to 209 (LRDPWNWLDFSVIIMAYTTEF). Residues 210–216 (VDLGNVS) lie on the Extracellular side of the membrane. Residue Asn-214 is glycosylated (N-linked (GlcNAc...) asparagine). The helical transmembrane segment at 217–236 (ALRTFRVLRALKTISVISGL) threads the bilayer. Over 237–249 (KTIVGALIQSVKK) the chain is Cytoplasmic. A helical transmembrane segment spans residues 250–272 (LADVMVLTVFCLSVFALIGLQLF). The Extracellular segment spans residues 273-357 (MGNLRHKCVR…PDHGYTSFDS (85 aa)). A disulfide bridge connects residues Cys-280 and Cys-335. 5 N-linked (GlcNAc...) asparagine glycosylation sites follow: Asn-283, Asn-288, Asn-291, Asn-318, and Asn-328. An intramembrane region (pore-forming) is located at residues 358–378 (FAWAFLALFRLMTQDCWERLY). Topologically, residues 379-386 (QQTLRSAG) are extracellular. A helical membrane pass occupies residues 387–413 (KIYMIFFMLVIFLGSFYLVNLILAVVA). The Cytoplasmic portion of the chain corresponds to 414 to 719 (MAYEEQNQAT…VKLVVMDPFT (306 aa)). Ser-457, Ser-460, Ser-483, and Ser-484 each carry phosphoserine. Residues 461–591 (LEMSPLAPVN…APGHALHGKK (131 aa)) form a disordered region. Thr-486 carries the phosphothreonine modification. The segment covering 491-503 (EDRLPKSDSEDGP) has biased composition (basic and acidic residues). Residues Ser-497 and Ser-510 each carry the phosphoserine modification. The segment covering 509–528 (LSLTRGLSRTSMKPRSSRGS) has biased composition (polar residues). 2 positions are modified to dimethylated arginine; alternate: Arg-513 and Arg-526. Omega-N-methylarginine; alternate occurs at positions 513 and 526. Ser-539, Ser-571, Ser-664, and Ser-667 each carry phosphoserine. Polar residues predominate over residues 570–580 (TSAQGQPSPGT). At Arg-680 the chain carries Dimethylated arginine; alternate. Arg-680 carries the post-translational modification Omega-N-methylarginine; alternate. Residues 699-969 (CCPLWMSIKQ…QLALARIQRG (271 aa)) form an II repeat. The helical transmembrane segment at 720 to 737 (DLTITMCIVLNTLFMALE) threads the bilayer. Residues 738-746 (HYNMTSEFE) lie on the Extracellular side of the membrane. Asn-740 is a glycosylation site (N-linked (GlcNAc...) asparagine). Residues 747-769 (EMLQVGNLVFTGIFTAEMTFKII) form a helical membrane-spanning segment. Residues 770–775 (ALDPYY) are Cytoplasmic-facing. The chain crosses the membrane as a helical span at residues 776–796 (YFQQGWNIFDSIIVILSLMEL). At 797-806 (GLSRMSNLSV) the chain is on the extracellular side. Residue Asn-803 is glycosylated (N-linked (GlcNAc...) asparagine). Residues 807–821 (LRSFRLLRVFKLAKS) form a helical membrane-spanning segment. Residues 822-838 (WPTLNTLIKIIGNSVGA) lie on the Cytoplasmic side of the membrane. The helical transmembrane segment at 839-860 (LGNLTLVLAIIVFIFAVVGMQL) threads the bilayer. Topologically, residues 861–884 (FGKNYSELRDSDSGLLPRWHMMDF) are extracellular. Asn-864 is a glycosylation site (N-linked (GlcNAc...) asparagine). Positions 885–903 (FHAFLIIFRILCGEWIETM) form an intramembrane region, pore-forming. Over 904-912 (WDCMEVSGQ) the chain is Extracellular. A disulfide bond links Cys-906 and Cys-915. A helical transmembrane segment spans residues 913-941 (SLCLLVFLLVMVIGNLVVLNLFLALLLSS). The Cytoplasmic segment spans residues 942-1203 (FSADNLTAPD…LRKTCYHIVE (262 aa)). The interval 1005–1141 (IATPYSPPPP…PEDSCSEGST (137 aa)) is disordered. A compositionally biased stretch (basic and acidic residues) spans 1015-1030 (ETEKVPPTRKETRFEE). Positions 1033-1044 (QPGQGTPGDPEP) are enriched in low complexity. Residues 1054–1071 (SDTDDQEEDEENSLGTEE) show a composition bias toward acidic residues. The segment covering 1096-1113 (SQVSATASSEAEASASQA) has biased composition (low complexity). An III repeat occupies 1187 to 1501 (PGKVWWRLRK…KKYYNAMKKL (315 aa)). The chain crosses the membrane as a helical span at residues 1204-1225 (HSWFETFIIFMILLSSGALAFE). Over 1226–1236 (DIYLEERKTIK) the chain is Extracellular. A helical membrane pass occupies residues 1237 to 1259 (VLLEYADKMFTYVFVLEMLLKWV). At 1260 to 1268 (AYGFKKYFT) the chain is on the cytoplasmic side. The helical transmembrane segment at 1269–1291 (NAWCWLDFLIVDVSLVSLVANTL) threads the bilayer. Over 1292-1297 (GFAEMG) the chain is Extracellular. The helical transmembrane segment at 1298–1317 (PIKSLRTLRALRPLRALSRF) threads the bilayer. Residues 1318 to 1330 (EGMRVVVNALVGA) are Cytoplasmic-facing. Residues 1331 to 1355 (IPSIMNVLLVCLIFWLIFSIMGVNL) form a helical membrane-spanning segment. Topologically, residues 1356-1400 (FAGKFGRCINQTEGDLPLNYTIVNNKSQCESLNLTGELYWTKVKV) are extracellular. N-linked (GlcNAc...) asparagine glycosylation is found at Asn-1365, Asn-1374, Asn-1380, and Asn-1388. The pore-forming intramembrane region spans 1401–1422 (NFDNVGAGYLALLQVATFKGWM). Topologically, residues 1423-1445 (DIMYAAVDSRGYEEQPQWEYNLY) are extracellular. Residues 1446-1470 (MYIYFVIFIIFGSFFTLNLFIGVII) form a helical membrane-spanning segment. Residues 1471-1528 (DNFNQQKKKLGGQDIFMTEEQKKYYNAMKKLGSKKPQKPIPRPLNKYQGFIFDIVTKQ) lie on the Cytoplasmic side of the membrane. Ser-1503 is subject to Phosphoserine; by PKC. The stretch at 1510 to 1807 (IPRPLNKYQG…WEKFDPEATQ (298 aa)) is one IV repeat. Residues 1529–1547 (AFDVTIMFLICLNMVTMMV) form a helical membrane-spanning segment. The Extracellular segment spans residues 1548 to 1558 (ETDDQSPEKIN). A helical membrane pass occupies residues 1559–1580 (ILAKINLLFVAIFTGECIVKLA). The Cytoplasmic portion of the chain corresponds to 1581–1589 (ALRHYYFTN). The chain crosses the membrane as a helical span at residues 1590 to 1612 (SWNIFDFVVVILSIVGTVLSDII). Over 1613–1619 (QKYFFSP) the chain is Extracellular. Residues 1620 to 1640 (TLFRVIRLARIGRILRLIRGA) traverse the membrane as a helical segment. Residues 1641-1650 (KGIRTLLFAL) are Cytoplasmic-facing. A helical membrane pass occupies residues 1651–1679 (MMSLPALFNIGLLLFLVMFIYSIFGMANF). Over 1680–1697 (AYVKWEAGIDDMFNFQTF) the chain is Extracellular. The pore-forming intramembrane region spans 1698-1714 (ANSMLCLFQITTSAGWD). Residues 1715–1745 (GLLSPILNTGPPYCDPTLPNSNGSRGDCGSP) are Extracellular-facing. The N-linked (GlcNAc...) asparagine glycan is linked to Asn-1736. The chain crosses the membrane as a helical span at residues 1746-1771 (AVGILFFTTYIIISFLIVVNMYIAII). Topologically, residues 1772 to 2016 (LENFSVATEE…SPDRDRESIV (245 aa)) are cytoplasmic. Residues 1839–1901 (DLPMVSGDRI…ITTTLRRKHE (63 aa)) are interaction with FGF13. The 30-residue stretch at 1901–1930 (EEVSAMVIQRAFRRHLLQRSLKHASFLFRQ) folds into the IQ domain. A compositionally biased stretch (low complexity) spans 1959–1979 (PLGPPSSSSISSTSFPPSYDS). Residues 1959 to 2016 (PLGPPSSSSISSTSFPPSYDSVTRATSDNLQVRGSDYSHSEDLADFPPSPDRDRESIV) are disordered. Residues 1974–1977 (PPSY) are interaction with NEDD4, NEDD4L and WWP2. Positions 1981–1990 (TRATSDNLQV) are enriched in polar residues.

Belongs to the sodium channel (TC 1.A.1.10) family. Nav1.5/SCN5A subfamily. In terms of assembly, cannot form the same regulatory interactions with beta subunits as other Navs do. Interacts with the PDZ domain of the syntrophin SNTA1, SNTB1 and SNTB2. Interacts with NEDD4, NEDD4L, WWP2 and GPD1L. Interacts with CALM. Interacts with FGF13; the interaction is direct and FGF13 may regulate SNC5A density at membranes and function. May also interact with FGF12 and FGF14. Interacts with TMEM233. Interacts with the spider Jingzhaotoxin-I (AC P83974, AC B1P1B7, AC B1P1B8). Interacts with ANK3. Interacts with PKP2 (via N-terminus). Interacts with XIRP2; the interaction is required for normal action potential configuration in the heart. In terms of processing, ubiquitinated by NEDD4L; which promotes its endocytosis. Does not seem to be ubiquitinated by NEDD4 or WWP2. Post-translationally, phosphorylation at Ser-1503 by PKC in a highly conserved cytoplasmic loop slows inactivation of the sodium channel and reduces peak sodium currents. Regulated through phosphorylation by CaMK2D. Lacks the cysteine which covalently binds the conotoxin GVIIJ. This cysteine (position 868) is speculated in other sodium channel subunits alpha to be implied in covalent binding with the sodium channel subunit beta-2 or beta-4. In terms of processing, N-glycosylated at Asn-318, probably hinders potential interaction with regulatory subunits. Found in jejunal circular smooth muscle cells (at protein level). Expressed in human atrial and ventricular cardiac muscle but not in adult skeletal muscle, brain, myometrium, liver, or spleen. Isoform 4 is expressed in brain.

It is found in the cell membrane. The protein localises to the cytoplasm. It localises to the perinuclear region. The protein resides in the sarcolemma. Its subcellular location is the T-tubule. It is found in the cell junction. The enzyme catalyses Na(+)(in) = Na(+)(out). Channel inactivation is regulated by intracellular calcium levels. It is a tetrodotoxin-resistant voltage-gated Na(+) channel (Nav). In terms of biological role, pore-forming subunit of Nav1.5, a voltage-gated sodium (Nav) channel that directly mediates the depolarizing phase of action potentials in excitable membranes. Navs, also called VGSCs (voltage-gated sodium channels) or VDSCs (voltage-dependent sodium channels), operate by switching between closed and open conformations depending on the voltage difference across the membrane. In the open conformation they allow Na(+) ions to selectively pass through the pore, along their electrochemical gradient. The influx of Na(+) ions provokes membrane depolarization, initiating the propagation of electrical signals throughout cells and tissues. Nav1.5 is the predominant sodium channel expressed in myocardial cells and it is responsible for the initial upstroke of the action potential in cardiac myocytes, thereby initiating the heartbeat. Required for normal electrical conduction including formation of the infranodal ventricular conduction system and normal action potential configuration, as a result of its interaction with XIRP2. The polypeptide is Sodium channel protein type 5 subunit alpha (Homo sapiens (Human)).